Here is a 219-residue protein sequence, read N- to C-terminus: MASCFSVSLLARVAVVEPIRVQLWLNVVNCMIESSMHQCPPRDRHFFSSSRPILLIRRSVSTVYRFVASRTTQVLRAAKTVVKWFIIVDPLINSILINYLIDRLCTLGHAVLRVKKRKTEERQPCSPIIQHTHVKRRKRPRLRIVAIKRKRRRRRPHRIERPLSNMYPIMEIQMVAVPLALPSPTALVHYQQQQQQLPQHHPWYDLSLSEEALSTCCCS.

2 helical membrane-spanning segments follow: residues Val-81–Ile-101 and Pro-168–Val-188.

The protein resides in the membrane. This is an uncharacterized protein from Saccharomyces cerevisiae (strain ATCC 204508 / S288c) (Baker's yeast).